A 455-amino-acid polypeptide reads, in one-letter code: UDP-N-acetylmuramoyl-tripeptide--D-alanyl-D-alanine ligase (455 aa).

107–113 is a binding site for ATP; it reads GSCGKTS.

This sequence belongs to the MurCDEF family. MurF subfamily.

The protein resides in the cytoplasm. It catalyses the reaction D-alanyl-D-alanine + UDP-N-acetyl-alpha-D-muramoyl-L-alanyl-gamma-D-glutamyl-meso-2,6-diaminopimelate + ATP = UDP-N-acetyl-alpha-D-muramoyl-L-alanyl-gamma-D-glutamyl-meso-2,6-diaminopimeloyl-D-alanyl-D-alanine + ADP + phosphate + H(+). It participates in cell wall biogenesis; peptidoglycan biosynthesis. Involved in cell wall formation. Catalyzes the final step in the synthesis of UDP-N-acetylmuramoyl-pentapeptide, the precursor of murein. In Buchnera aphidicola subsp. Acyrthosiphon pisum (strain APS) (Acyrthosiphon pisum symbiotic bacterium), this protein is UDP-N-acetylmuramoyl-tripeptide--D-alanyl-D-alanine ligase.